The chain runs to 116 residues: MLKSQFQQKKMTRNYTGAWQKTPGRLLGIFLIRFYQITLSSLIGNQCRHAPTCSEYIYEAIARHGLWAGAWMGLFRIMRCGPFGTDGFDPVPPSLGHSCCFYKPWRYWKISDKHNK.

This sequence belongs to the UPF0161 family.

The protein resides in the cell inner membrane. Its function is as follows. Could be involved in insertion of integral membrane proteins into the membrane. The polypeptide is Putative membrane protein insertion efficiency factor (Bartonella tribocorum (strain CIP 105476 / IBS 506)).